A 597-amino-acid chain; its full sequence is Elongation factor 4 (597 aa).

The tr-type G domain maps to 2 to 184 (KHIRNFSIIA…EIVARIPAPV (183 aa)). Residues 14-19 (DHGKST) and 131-134 (NKID) each bind GTP.

Belongs to the TRAFAC class translation factor GTPase superfamily. Classic translation factor GTPase family. LepA subfamily.

The protein resides in the cell inner membrane. The catalysed reaction is GTP + H2O = GDP + phosphate + H(+). In terms of biological role, required for accurate and efficient protein synthesis under certain stress conditions. May act as a fidelity factor of the translation reaction, by catalyzing a one-codon backward translocation of tRNAs on improperly translocated ribosomes. Back-translocation proceeds from a post-translocation (POST) complex to a pre-translocation (PRE) complex, thus giving elongation factor G a second chance to translocate the tRNAs correctly. Binds to ribosomes in a GTP-dependent manner. The polypeptide is Elongation factor 4 (Aeromonas salmonicida (strain A449)).